The following is a 424-amino-acid chain: Gamma-glutamyl phosphate reductase (424 aa).

This sequence belongs to the gamma-glutamyl phosphate reductase family.

It localises to the cytoplasm. It carries out the reaction L-glutamate 5-semialdehyde + phosphate + NADP(+) = L-glutamyl 5-phosphate + NADPH + H(+). Its pathway is amino-acid biosynthesis; L-proline biosynthesis; L-glutamate 5-semialdehyde from L-glutamate: step 2/2. Its function is as follows. Catalyzes the NADPH-dependent reduction of L-glutamate 5-phosphate into L-glutamate 5-semialdehyde and phosphate. The product spontaneously undergoes cyclization to form 1-pyrroline-5-carboxylate. The chain is Gamma-glutamyl phosphate reductase from Shewanella sediminis (strain HAW-EB3).